A 71-amino-acid polypeptide reads, in one-letter code: uncharacterized protein (71 aa).

The disordered stretch occupies residues 52–71; it reads KEKFERKEDEKSKPKGVRED.

This is an uncharacterized protein from Archaeoglobus fulgidus (strain ATCC 49558 / DSM 4304 / JCM 9628 / NBRC 100126 / VC-16).